We begin with the raw amino-acid sequence, 400 residues long: Autophagy-related protein 18 (400 aa).

2 WD repeats span residues 163–203 (AHKS…KLYQ) and 208–247 (SMPS…PSED). The short motif at 204 to 208 (FRRGS) is the L/FRRG motif element. Positions 241–296 (HQDPSEDLPTSPIGTDSRKTNSTPRERAFSQGSSTLSGGDNSPTDGDPSDISSRKH) are disordered. A compositionally biased stretch (basic and acidic residues) spans 256-268 (DSRKTNSTPRERA). The segment covering 270-284 (SQGSSTLSGGDNSPT) has biased composition (polar residues). WD repeat units lie at residues 295 to 341 (KHNG…AWIR) and 353 to 393 (SNAG…GGEG).

Belongs to the WD repeat PROPPIN family. In terms of assembly, component of the PI(3,5)P2 regulatory complex.

It localises to the preautophagosomal structure membrane. The protein resides in the vacuole membrane. It is found in the endosome membrane. The PI(3,5)P2 regulatory complex regulates both the synthesis and turnover of phosphatidylinositol 3,5-bisphosphate (PtdIns(3,5)P2). Necessary for proper vacuole morphology. Plays an important role in osmotically-induced vacuole fragmentation. Required for cytoplasm to vacuole transport (Cvt) vesicle formation, pexophagy and starvation-induced autophagy. Involved in correct ATG9 trafficking to the pre-autophagosomal structure. Might also be involved in premeiotic DNA replication. The chain is Autophagy-related protein 18 (ATG18) from Ajellomyces capsulatus (strain NAm1 / WU24) (Darling's disease fungus).